The chain runs to 356 residues: GTPase Obg (356 aa).

An Obg domain is found at 1 to 159 (MKFIDRVKIH…RWLRLELKLL (159 aa)). Positions 160–331 (ADVGLLGMPN…LVAEVARELE (172 aa)) constitute an OBG-type G domain. Residues 166–173 (GMPNAGKS), 191–195 (FTTLV), 213–216 (DIPG), 283–286 (SKID), and 312–314 (SAV) contribute to the GTP site. S173 and T193 together coordinate Mg(2+).

Belongs to the TRAFAC class OBG-HflX-like GTPase superfamily. OBG GTPase family. In terms of assembly, monomer. The cofactor is Mg(2+).

Its subcellular location is the cytoplasm. Functionally, an essential GTPase which binds GTP, GDP and possibly (p)ppGpp with moderate affinity, with high nucleotide exchange rates and a fairly low GTP hydrolysis rate. Plays a role in control of the cell cycle, stress response, ribosome biogenesis and in those bacteria that undergo differentiation, in morphogenesis control. The polypeptide is GTPase Obg (Syntrophotalea carbinolica (strain DSM 2380 / NBRC 103641 / GraBd1) (Pelobacter carbinolicus)).